The following is a 494-amino-acid chain: Probable serine/threonine-protein kinase BSK3 (494 aa).

Residue Gly2 is the site of N-myristoyl glycine attachment. Residues Glu61–Gln316 form the Protein kinase domain. Residues His67–Val75 and Lys89 each bind ATP. Catalysis depends on Asp183, which acts as the Proton acceptor. A phosphoserine mark is found at Ser213 and Ser215. The TPR repeat unit spans residues Pro423 to Trp456.

In terms of assembly, interacts with BRI1 and BSL1. In terms of processing, phosphorylated at Ser-213 and Ser-215 by BRI1. Phosphorylation at Ser-215 is required for its function in the regulation of brassinosteroid signaling. Phosphorylation by BRI1 disrupts the interaction between its TPR and kinase domains, thereby increasing the binding between its kinase domain and BSL1.

Its subcellular location is the cell membrane. The enzyme catalyses L-seryl-[protein] + ATP = O-phospho-L-seryl-[protein] + ADP + H(+). The catalysed reaction is L-threonyl-[protein] + ATP = O-phospho-L-threonyl-[protein] + ADP + H(+). Its function is as follows. Probable serine/threonine kinase that acts as a positive regulator of brassinosteroid (BR) signaling downstream of BRI1. The chain is Probable serine/threonine-protein kinase BSK3 from Oryza sativa subsp. japonica (Rice).